We begin with the raw amino-acid sequence, 387 residues long: Eukaryotic translation initiation factor 3 subunit M (387 aa).

One can recognise a PCI domain in the interval 181–340 (LSSKVMIELL…RKVHISSTMH (160 aa)).

This sequence belongs to the eIF-3 subunit M family. In terms of assembly, component of the eukaryotic translation initiation factor 3 (eIF-3) complex. The eIF-3 complex interacts with pix.

The protein localises to the cytoplasm. It localises to the golgi apparatus. In terms of biological role, component of the eukaryotic translation initiation factor 3 (eIF-3) complex, which is involved in protein synthesis of a specialized repertoire of mRNAs and, together with other initiation factors, stimulates binding of mRNA and methionyl-tRNAi to the 40S ribosome. The eIF-3 complex specifically targets and initiates translation of a subset of mRNAs involved in cell proliferation. This Drosophila pseudoobscura pseudoobscura (Fruit fly) protein is Eukaryotic translation initiation factor 3 subunit M.